Consider the following 346-residue polypeptide: WD repeat-containing protein LWD1 (346 aa).

Residue methionine 1 is modified to N-acetylmethionine. WD repeat units follow at residues 79–121 (EHPY…SRVE), 133–173 (EFCG…VDTQ), 176–214 (AHDKEVFDIAWGGVGVFASVSADGSVRVFDLRDKEHSTI), and 265–305 (RHQA…QHVE).

The protein localises to the nucleus. Its function is as follows. Clock protein essential for the proper expression phase and period length of both the oscillator and output genes known to participate in photoperiod sensing. Required for the expression of APRR9, APRR7, and APRR5. Regulated by APRR9 and APRR7 at the transcriptional level, indicating the existence of a positive feedback loop within the circadian clock. May function to delay the expression of the morning genes until dawn approaches. The protein is WD repeat-containing protein LWD1 (LWD1) of Arabidopsis thaliana (Mouse-ear cress).